We begin with the raw amino-acid sequence, 153 residues long: SsrA-binding protein (153 aa).

The span at alanine 133–glutamine 143 shows a compositional bias: basic and acidic residues. The interval alanine 133 to tyrosine 153 is disordered. Residues methionine 144–tyrosine 153 are compositionally biased toward low complexity.

This sequence belongs to the SmpB family.

The protein localises to the cytoplasm. Required for rescue of stalled ribosomes mediated by trans-translation. Binds to transfer-messenger RNA (tmRNA), required for stable association of tmRNA with ribosomes. tmRNA and SmpB together mimic tRNA shape, replacing the anticodon stem-loop with SmpB. tmRNA is encoded by the ssrA gene; the 2 termini fold to resemble tRNA(Ala) and it encodes a 'tag peptide', a short internal open reading frame. During trans-translation Ala-aminoacylated tmRNA acts like a tRNA, entering the A-site of stalled ribosomes, displacing the stalled mRNA. The ribosome then switches to translate the ORF on the tmRNA; the nascent peptide is terminated with the 'tag peptide' encoded by the tmRNA and targeted for degradation. The ribosome is freed to recommence translation, which seems to be the essential function of trans-translation. This chain is SsrA-binding protein, found in Protochlamydia amoebophila (strain UWE25).